The primary structure comprises 117 residues: Basic phospholipase A2 pseudexin B chain (117 aa).

7 disulfides stabilise this stretch: cysteine 11–cysteine 71, cysteine 27–cysteine 117, cysteine 29–cysteine 45, cysteine 44–cysteine 98, cysteine 51–cysteine 91, cysteine 60–cysteine 84, and cysteine 78–cysteine 89. Ca(2+) contacts are provided by tyrosine 28, glycine 30, and glycine 32. Histidine 48 is a catalytic residue. Aspartate 49 is a Ca(2+) binding site. Residue aspartate 92 is part of the active site.

It belongs to the phospholipase A2 family. Group I subfamily. D49 sub-subfamily. Requires Ca(2+) as cofactor. As to expression, expressed by the venom gland.

Its subcellular location is the secreted. The catalysed reaction is a 1,2-diacyl-sn-glycero-3-phosphocholine + H2O = a 1-acyl-sn-glycero-3-phosphocholine + a fatty acid + H(+). Its function is as follows. PLA2 catalyzes the calcium-dependent hydrolysis of the 2-acyl groups in 3-sn-phosphoglycerides. This is Basic phospholipase A2 pseudexin B chain from Pseudechis porphyriacus (Red-bellied black snake).